A 275-amino-acid polypeptide reads, in one-letter code: MISVAPKVNQANTSLKLDLDNLTTEQTALEIKDLDLYYGDKQALSKVNMNIPKGQVTAFIGPSGCGKSTLLRCINRMNDLVDICRIEGEILLHGQNIYDKSVDVAALRRNVGMVFQRPNPFPKSIYENVVYGLRLQGIKDKRKLDEVVEQSLRGAALWDEVKDRLHDSAFGLSGGQQQRLVIARSIAISPEVLLLDEPTSALDPISTLVIEELINDLKSKFTVVIVTHNMQQAARVSDQTAFMYMGELIEYSDTNTLFTTPNKKKTEDYITGRYG.

The ABC transporter domain maps to 29-270; sequence LEIKDLDLYY…PNKKKTEDYI (242 aa). 61-68 is an ATP binding site; sequence GPSGCGKS.

It belongs to the ABC transporter superfamily. Phosphate importer (TC 3.A.1.7) family. The complex is composed of two ATP-binding proteins (PstB), two transmembrane proteins (PstC and PstA) and a solute-binding protein (PstS).

The protein localises to the cell inner membrane. The catalysed reaction is phosphate(out) + ATP + H2O = ADP + 2 phosphate(in) + H(+). Part of the ABC transporter complex PstSACB involved in phosphate import. Responsible for energy coupling to the transport system. This chain is Phosphate import ATP-binding protein PstB, found in Pseudoalteromonas translucida (strain TAC 125).